Here is a 249-residue protein sequence, read N- to C-terminus: Segregation and condensation protein A (249 aa).

Belongs to the ScpA family. As to quaternary structure, component of a cohesin-like complex composed of ScpA, ScpB and the Smc homodimer, in which ScpA and ScpB bind to the head domain of Smc. The presence of the three proteins is required for the association of the complex with DNA.

It is found in the cytoplasm. In terms of biological role, participates in chromosomal partition during cell division. May act via the formation of a condensin-like complex containing Smc and ScpB that pull DNA away from mid-cell into both cell halves. In Listeria monocytogenes serotype 4a (strain HCC23), this protein is Segregation and condensation protein A.